The chain runs to 453 residues: TATA box-binding protein-associated factor RNA polymerase I subunit A (453 aa).

In terms of assembly, component of the transcription factor SL1/TIF-IB complex, composed of TBP and at least TAF1A, TAF1B, TAF1C and TAF1D. In the complex interacts directly with TBP, TAF1A and TAF1B. Interaction of the SL1/TIF-IB subunits with TBP excludes interaction of TBP with the transcription factor IID (TFIID) subunits. Interacts with UBFT. Interacts with CEBPA (isoform 1 and isoform 4). Part of Pol I pre-initiation complex (PIC), in which Pol I core assembles with RRN3 and promoter-bound UTBF and SL1/TIF-IB complex.

Its subcellular location is the nucleus. The protein localises to the nucleolus. Functionally, component of the transcription factor SL1/TIF-IB complex, which is involved in the assembly of the PIC (pre-initiation complex) during RNA polymerase I-dependent transcription. The rate of PIC formation probably is primarily dependent on the rate of association of SL1/TIF-IB with the rDNA promoter. SL1/TIF-IB is involved in stabilization of nucleolar transcription factor 1/UBTF on rDNA. Formation of SL1/TIF-IB excludes the association of TBP with TFIID subunits. This chain is TATA box-binding protein-associated factor RNA polymerase I subunit A (Taf1a), found in Mus musculus (Mouse).